A 71-amino-acid polypeptide reads, in one-letter code: DNA-directed RNA polymerases I, II, and III subunit RPABC5 (71 aa).

Positions 7, 10, 44, and 45 each coordinate Zn(2+).

Belongs to the archaeal Rpo10/eukaryotic RPB10 RNA polymerase subunit family. In terms of assembly, component of the RNA polymerase I (Pol I), RNA polymerase II (Pol II) and RNA polymerase III (Pol III) complexes consisting of at least 13, 12 and 17 subunits, respectively.

It localises to the nucleus. In terms of biological role, DNA-dependent RNA polymerase catalyzes the transcription of DNA into RNA using the four ribonucleoside triphosphates as substrates. Common component of RNA polymerases I, II and III which synthesize ribosomal RNA precursors, mRNA precursors and many functional non-coding RNAs, and a small RNAs, such as 5S rRNA and tRNAs, respectively. Pol II is the central component of the basal RNA polymerase II transcription machinery. Pols are composed of mobile elements that move relative to each other. In Pol II, RBP10 is part of the core element with the central large cleft. The protein is DNA-directed RNA polymerases I, II, and III subunit RPABC5 of Brassica napus (Rape).